The following is a 465-amino-acid chain: Ribulose bisphosphate carboxylase large chain (465 aa).

N6,N6,N6-trimethyllysine is present on Lys-4. The substrate site is built by Asn-113 and Thr-163. Residue Lys-165 is the Proton acceptor of the active site. Lys-167 lines the substrate pocket. 3 residues coordinate Mg(2+): Lys-191, Asp-193, and Glu-194. Lys-191 carries the post-translational modification N6-carboxylysine. His-284 serves as the catalytic Proton acceptor. The substrate site is built by Arg-285, His-317, and Ser-369.

Belongs to the RuBisCO large chain family. Type I subfamily. As to quaternary structure, heterohexadecamer of 8 large chains and 8 small chains; disulfide-linked. The disulfide link is formed within the large subunit homodimers. Mg(2+) serves as cofactor. In terms of processing, the disulfide bond which can form in the large chain dimeric partners within the hexadecamer appears to be associated with oxidative stress and protein turnover.

Its subcellular location is the plastid. The protein localises to the chloroplast. The enzyme catalyses 2 (2R)-3-phosphoglycerate + 2 H(+) = D-ribulose 1,5-bisphosphate + CO2 + H2O. It carries out the reaction D-ribulose 1,5-bisphosphate + O2 = 2-phosphoglycolate + (2R)-3-phosphoglycerate + 2 H(+). Functionally, ruBisCO catalyzes two reactions: the carboxylation of D-ribulose 1,5-bisphosphate, the primary event in carbon dioxide fixation, as well as the oxidative fragmentation of the pentose substrate in the photorespiration process. Both reactions occur simultaneously and in competition at the same active site. This is Ribulose bisphosphate carboxylase large chain from Cornus oblonga.